We begin with the raw amino-acid sequence, 56 residues long: Bdellin B-3 (56 aa).

The Kazal-like domain occupies 1-42; it reads DTECVCTKELHRVCGSDGVTYDNECLATCHGASVAHDHACEG. 3 disulfide bridges follow: C4–C29, C6–C25, and C14–C40.

Functionally, proteinase inhibitor. Blocks the activity of trypsin, plasmin and sperm acrosin. This Hirudo medicinalis (Medicinal leech) protein is Bdellin B-3.